Here is a 233-residue protein sequence, read N- to C-terminus: AA9 family lytic polysaccharide monooxygenase A (233 aa).

The first 17 residues, M1–A17, serve as a signal peptide directing secretion. 2 residues coordinate Cu(2+): H18 and H90. 2 disulfides stabilise this stretch: C59/C180 and C150/C233. N132 carries N-linked (GlcNAc...) asparagine glycosylation. 2 residues coordinate O2: H166 and Q175. Residue Y177 coordinates Cu(2+).

Belongs to the polysaccharide monooxygenase AA9 family. The cofactor is Cu(2+).

The protein localises to the secreted. It carries out the reaction [(1-&gt;4)-beta-D-glucosyl]n+m + reduced acceptor + O2 = 4-dehydro-beta-D-glucosyl-[(1-&gt;4)-beta-D-glucosyl]n-1 + [(1-&gt;4)-beta-D-glucosyl]m + acceptor + H2O.. Functionally, lytic polysaccharide monooxygenase (LPMO) that depolymerizes crystalline and amorphous polysaccharides via the oxidation of scissile alpha- or beta-(1-4)-glycosidic bonds, yielding C1 and C4 oxidation products. Catalysis by LPMOs requires the reduction of the active-site copper from Cu(II) to Cu(I) by a reducing agent and H(2)O(2) or O(2) as a cosubstrate. Shows endoglucanase activity on tamarind xyloglucan, as well as on beechwood xylan when combined with phosphoric acid swollen cellulose (PASC). Shows no activity on wheat arabinoxylan, konjac glucomannan, acetylated spruce galactoglucomannan, or cellopentaose. The protein is AA9 family lytic polysaccharide monooxygenase A of Thermothielavioides terrestris (strain ATCC 38088 / NRRL 8126) (Thielavia terrestris).